Reading from the N-terminus, the 151-residue chain is MKTCQSSHLDSGVESDIQCRSGSGCVVKCSTERMESAAKRRLAANARERRRMQGLNTAFDRLRKVVPQWGQDKKLSKYETLQMALSYIMALTRILAEAERYSTEREWINLHCEHFHPESYHHYTGQKVATDSDPYAQRIFSYHPEHFQIAN.

The bHLH domain occupies 39–91; it reads KRRLAANARERRRMQGLNTAFDRLRKVVPQWGQDKKLSKYETLQMALSYIMAL.

The protein localises to the nucleus. It localises to the perikaryon. Its subcellular location is the cell projection. The protein resides in the axon. Transcription factor that binds to DNA at the consensus sequence 5'-CAG[GC]TG-3'. Positively regulates the determination of retinal ganglion cell fate and formation of the optic nerve and retino-hypothalamic tract. Required for retinal circadian rhythm photoentrainment. Plays a role in brainstem auditory signaling and binaural processing. During retinal neurogenesis, activates its own transcription, as well as the transcription of CHRNB3 and BRN3. This Gallus gallus (Chicken) protein is Transcription factor ATOH7.